The sequence spans 533 residues: uncharacterized protein (533 aa).

Polar residues-rich tracts occupy residues S30–H43, N79–S91, N231–A247, and G254–N263. Disordered stretches follow at residues S30–A92 and S221–S274. At S336 the chain carries Phosphoserine. The segment at H475–V510 is disordered. The span at P476–P490 shows a compositional bias: low complexity. Basic and acidic residues predominate over residues P498 to V510.

It localises to the nucleus. This is an uncharacterized protein from Schizosaccharomyces pombe (strain 972 / ATCC 24843) (Fission yeast).